A 429-amino-acid polypeptide reads, in one-letter code: Enolase (429 aa).

(2R)-2-phosphoglycerate is bound at residue glutamine 162. Glutamate 204 serves as the catalytic Proton donor. Residues aspartate 241, glutamate 282, and aspartate 309 each contribute to the Mg(2+) site. (2R)-2-phosphoglycerate is bound by residues lysine 334, arginine 363, serine 364, and lysine 385. Residue lysine 334 is the Proton acceptor of the active site.

This sequence belongs to the enolase family. Mg(2+) is required as a cofactor.

The protein localises to the cytoplasm. The protein resides in the secreted. Its subcellular location is the cell surface. The enzyme catalyses (2R)-2-phosphoglycerate = phosphoenolpyruvate + H2O. It participates in carbohydrate degradation; glycolysis; pyruvate from D-glyceraldehyde 3-phosphate: step 4/5. Catalyzes the reversible conversion of 2-phosphoglycerate (2-PG) into phosphoenolpyruvate (PEP). It is essential for the degradation of carbohydrates via glycolysis. The chain is Enolase from Acidothermus cellulolyticus (strain ATCC 43068 / DSM 8971 / 11B).